A 382-amino-acid polypeptide reads, in one-letter code: Alkanesulfonate monooxygenase (382 aa).

It belongs to the SsuD family. As to quaternary structure, homotetramer.

The enzyme catalyses an alkanesulfonate + FMNH2 + O2 = an aldehyde + FMN + sulfite + H2O + 2 H(+). In terms of biological role, catalyzes the desulfonation of aliphatic sulfonates. The protein is Alkanesulfonate monooxygenase of Yersinia pseudotuberculosis serotype O:1b (strain IP 31758).